We begin with the raw amino-acid sequence, 431 residues long: Enolase (431 aa).

Glutamine 167 contributes to the (2R)-2-phosphoglycerate binding site. The active-site Proton donor is the glutamate 209. Residues aspartate 246, glutamate 290, and aspartate 317 each contribute to the Mg(2+) site. Residues lysine 342, arginine 371, serine 372, and lysine 393 each coordinate (2R)-2-phosphoglycerate. Residue lysine 342 is the Proton acceptor of the active site.

It belongs to the enolase family. As to quaternary structure, component of the RNA degradosome, a multiprotein complex involved in RNA processing and mRNA degradation. Mg(2+) is required as a cofactor.

The protein localises to the cytoplasm. Its subcellular location is the secreted. The protein resides in the cell surface. The catalysed reaction is (2R)-2-phosphoglycerate = phosphoenolpyruvate + H2O. Its pathway is carbohydrate degradation; glycolysis; pyruvate from D-glyceraldehyde 3-phosphate: step 4/5. In terms of biological role, catalyzes the reversible conversion of 2-phosphoglycerate (2-PG) into phosphoenolpyruvate (PEP). It is essential for the degradation of carbohydrates via glycolysis. This Yersinia pseudotuberculosis serotype O:1b (strain IP 31758) protein is Enolase.